The following is a 198-amino-acid chain: Peptidyl-tRNA hydrolase (198 aa).

A tRNA-binding site is contributed by tyrosine 17. The active-site Proton acceptor is histidine 22. 3 residues coordinate tRNA: tyrosine 74, asparagine 76, and asparagine 122.

It belongs to the PTH family. In terms of assembly, monomer.

The protein resides in the cytoplasm. The enzyme catalyses an N-acyl-L-alpha-aminoacyl-tRNA + H2O = an N-acyl-L-amino acid + a tRNA + H(+). Its function is as follows. Hydrolyzes ribosome-free peptidyl-tRNAs (with 1 or more amino acids incorporated), which drop off the ribosome during protein synthesis, or as a result of ribosome stalling. In terms of biological role, catalyzes the release of premature peptidyl moieties from peptidyl-tRNA molecules trapped in stalled 50S ribosomal subunits, and thus maintains levels of free tRNAs and 50S ribosomes. This chain is Peptidyl-tRNA hydrolase, found in Kineococcus radiotolerans (strain ATCC BAA-149 / DSM 14245 / SRS30216).